We begin with the raw amino-acid sequence, 359 residues long: 4-galactosyl-N-acetylglucosaminide 3-alpha-L-fucosyltransferase 9 (359 aa).

The Cytoplasmic segment spans residues 1–11 (MTSASKGILRP). The helical; Signal-anchor for type II membrane protein transmembrane segment at 12 to 32 (FLIVCIILACSMVCLFIYIKP) threads the bilayer. At 33-359 (TNSWIFSPME…VGNLEKWFWN (327 aa)) the chain is on the lumenal side. N-linked (GlcNAc...) asparagine glycosylation occurs at N62. The tract at residues 63-168 (ETTILIWVWP…RRDSDIQVPY (106 aa)) is acceptor-binding. An a beta-D-galactosyl-(1-&gt;4)-N-acetyl-beta-D-glucosaminyl derivative-binding site is contributed by Q75. 3 disulfides stabilise this stretch: C82/C335, C91/C338, and C190/C238. N101 carries an N-linked (GlcNAc...) asparagine glycan. E137 serves as a coordination point for a beta-D-galactosyl-(1-&gt;4)-N-acetyl-beta-D-glucosaminyl derivative. E137 (nucleophile) is an active-site residue. GDP-beta-L-fucose is bound at residue E137. N153 carries an N-linked (GlcNAc...) asparagine glycan. Residues Y168, V192, S194, N195, R202, V226, Y241, N246, Y252, E255, and K256 each contribute to the GDP-beta-L-fucose site. Residues 169-326 (GFLTVSTNPF…NWRKDFTVNL (158 aa)) form a donor-binding region. Residues 327–359 (PRFWESHACLACDHVKRHQEYKSVGNLEKWFWN) form an acceptor-binding region.

This sequence belongs to the glycosyltransferase 10 family. In terms of assembly, homodimer. Post-translationally, N-glycosylated with complex-type N-glycans.

The protein resides in the golgi apparatus. It localises to the trans-Golgi network membrane. It is found in the golgi apparatus membrane. The catalysed reaction is a beta-D-galactosyl-(1-&gt;4)-N-acetyl-beta-D-glucosaminyl derivative + GDP-beta-L-fucose = a beta-D-galactosyl-(1-&gt;4)-[alpha-L-fucosyl-(1-&gt;3)]-N-acetyl-beta-D-glucosaminyl derivative + GDP + H(+). It catalyses the reaction an alpha-Neu5Ac-(2-&gt;3)-beta-D-Gal-(1-&gt;4)-beta-D-GlcNAc-(1-&gt;3)-beta-D-Gal-(1-&gt;4)-beta-D-GlcNAc derivative + GDP-beta-L-fucose = an alpha-Neu5Ac-(2-&gt;3)-beta-D-Gal-(1-&gt;4)-beta-D-GlcNAc-(1-&gt;3)-beta-D-Gal-(1-&gt;4)-[alpha-L-Fuc-(1-&gt;3)]-beta-D-GlcNAc derivative + GDP + H(+). It carries out the reaction alpha-N-glycoloylneuraminosyl-(2-&gt;3)-beta-D-galactosyl-(1-&gt;4)-N-acetyl-beta-D-glucosaminyl-(1-&gt;3)-beta-D-galactosyl-(1-&gt;4)-N-acetyl-beta-D-glucosaminyl-(1-&gt;3)-beta-D-galactosyl-(1-&gt;4)-beta-D-glucosyl-(1&lt;-&gt;1')-ceramide + GDP-beta-L-fucose = alpha-N-glycoloylneuraminosyl-(2-&gt;3)-beta-D-galactosyl-(1-&gt;4)-N-acetyl-beta-D-glucosaminyl-(1-&gt;3)-beta-D-galactosyl-(1-&gt;4)-[alpha-L-fucosyl-(1-&gt;3)]-N-acetyl-beta-D-glucosaminyl-(1-&gt;3)-beta-D-galactosyl-(1-&gt;4)-beta-D-glucosyl-(1&lt;-&gt;1')-ceramide + GDP + H(+). The enzyme catalyses alpha-D-galactosyl-(1-&gt;3)-beta-D-galactosyl-(1-&gt;4)-N-acetyl-beta-D-glucosaminyl-(1-&gt;3)-beta-D-galactosyl-(1-&gt;4)-beta-D-glucosyl-(1&lt;-&gt;1')-ceramide + GDP-beta-L-fucose = a neolactoside IV(3)-alpha-Gal,III(3)-alpha-Fuc-nLc4Cer + GDP + H(+). The catalysed reaction is a neolactoside nLc4Cer + GDP-beta-L-fucose = a neolactoside III(3)-alpha-Fuc-nLc4Cer + GDP + H(+). It catalyses the reaction an N-acetyl-alpha-neuraminyl-(2-&gt;3)-beta-D-galactosyl-(1-&gt;4)-N-acetyl-beta-D-glucosaminyl derivative + GDP-beta-L-fucose = an alpha-Neu5Ac-(2-&gt;3)-beta-D-Gal-(1-&gt;4)-[alpha-L-Fuc-(1-&gt;3)]-beta-D-GlcNAc derivative + GDP + H(+). It carries out the reaction beta-D-Gal-(1-&gt;4)-beta-D-GlcNAc-(1-&gt;3)-beta-D-Gal-(1-&gt;4)-D-Glc + GDP-beta-L-fucose = beta-D-Gal-(1-&gt;4)-[alpha-L-Fuc-(1-&gt;3)]-beta-D-GlcNAc-(1-&gt;3)-beta-D-Gal-(1-&gt;4)-D-Glc + GDP + H(+). The enzyme catalyses an alpha-L-Fuc-(1-&gt;2)-beta-D-Gal-(1-&gt;4)-beta-D-GlcNAc derivative + GDP-beta-L-fucose = an alpha-L-Fuc-(1-&gt;2)-beta-D-Gal-(1-&gt;4)-[alpha-L-Fuc-(1-&gt;3)]-beta-D-GlcNAc derivative + GDP + H(+). It functions in the pathway protein modification; protein glycosylation. Its pathway is glycolipid biosynthesis. Activated by Mn2+. Its function is as follows. Catalyzes alpha(1-&gt;3) linkage of fucosyl moiety transferred from GDP-beta-L-fucose to N-acetyl glucosamine (GlcNAc) within type 2 lactosamine (LacNAc, beta-D-Gal-(1-&gt;4)-beta-D-GlcNAc-) glycan attached to glycolipids and N- or O-linked glycoproteins. Fucosylates distal type 2 LacNAc and its fucosylated (H-type 2 LacNAc) and sialylated (sialyl-type 2 LacNAc) derivatives to form Lewis x (Lex) (CD15) and Lewis y (Ley) antigenic epitopes involved in cell adhesion and differentiation. Generates Lex epitopes in the brain, presumably playing a role in the maintenance of neuronal stemness and neurite outgrowth in progenitor neural cells. Fucosylates the internal type 2 LacNAc unit of the polylactosamine chain to form VIM-2 antigen that serves as recognition epitope for SELE. Can also modify milk oligosaccharides in particular type 2 tetrasaccharide LNnT. This Bos taurus (Bovine) protein is 4-galactosyl-N-acetylglucosaminide 3-alpha-L-fucosyltransferase 9.